Reading from the N-terminus, the 320-residue chain is Porphobilinogen deaminase (320 aa).

At Cys248 the chain carries S-(dipyrrolylmethanemethyl)cysteine.

It belongs to the HMBS family. As to quaternary structure, monomer. The cofactor is dipyrromethane.

The catalysed reaction is 4 porphobilinogen + H2O = hydroxymethylbilane + 4 NH4(+). It functions in the pathway porphyrin-containing compound metabolism; protoporphyrin-IX biosynthesis; coproporphyrinogen-III from 5-aminolevulinate: step 2/4. The protein operates within porphyrin-containing compound metabolism; chlorophyll biosynthesis. In terms of biological role, tetrapolymerization of the monopyrrole PBG into the hydroxymethylbilane pre-uroporphyrinogen in several discrete steps. In Synechococcus elongatus (strain ATCC 33912 / PCC 7942 / FACHB-805) (Anacystis nidulans R2), this protein is Porphobilinogen deaminase.